The sequence spans 613 residues: Chitin synthase 8 (613 aa).

The disordered stretch occupies residues 1–73 (MAVSPTAKRK…PAPLTRPPPP (73 aa)). An N-linked (GlcNAc...) asparagine glycan is attached at Asn17. Positions 18 to 27 (LSRQSSSART) are enriched in polar residues. Residues 61–73 (ESPPAPLTRPPPP) show a composition bias toward pro residues. The next 2 helical transmembrane spans lie at 119-139 (YSLI…LWNY) and 142-162 (YWYI…IFAI). Residues Asn312, Asn421, and Asn471 are each glycosylated (N-linked (GlcNAc...) asparagine). A run of 2 helical transmembrane segments spans residues 556 to 576 (VTTW…AIAL) and 583 to 602 (IFEN…RYAA).

It belongs to the chitin synthase family.

It localises to the cell membrane. It catalyses the reaction [(1-&gt;4)-N-acetyl-beta-D-glucosaminyl](n) + UDP-N-acetyl-alpha-D-glucosamine = [(1-&gt;4)-N-acetyl-beta-D-glucosaminyl](n+1) + UDP + H(+). Functionally, polymerizes chitin, a structural polymer of the cell wall and septum, by transferring the sugar moiety of UDP-GlcNAc to the non-reducing end of the growing chitin polymer. Plays a role in cell wall integrity. Plays a key role in pathogenicity. Likely contributes to post-penetration virulence. The protein is Chitin synthase 8 of Verticillium dahliae (strain VdLs.17 / ATCC MYA-4575 / FGSC 10137) (Verticillium wilt).